A 132-amino-acid polypeptide reads, in one-letter code: Small ribosomal subunit protein uS8 (132 aa).

The protein belongs to the universal ribosomal protein uS8 family. In terms of assembly, part of the 30S ribosomal subunit. Contacts proteins S5 and S12.

Functionally, one of the primary rRNA binding proteins, it binds directly to 16S rRNA central domain where it helps coordinate assembly of the platform of the 30S subunit. The protein is Small ribosomal subunit protein uS8 of Roseiflexus castenholzii (strain DSM 13941 / HLO8).